A 165-amino-acid chain; its full sequence is UPF0303 protein BceJ2315_15790 (165 aa).

It belongs to the UPF0303 family.

This Burkholderia cenocepacia (strain ATCC BAA-245 / DSM 16553 / LMG 16656 / NCTC 13227 / J2315 / CF5610) (Burkholderia cepacia (strain J2315)) protein is UPF0303 protein BceJ2315_15790.